The sequence spans 941 residues: RNA-directed RNA polymerase (941 aa).

Residues 875–918 form a disordered region; the sequence is SARQGGMGLPPPPPPPLGGGGMAGPPPPPFMGLRPESSVPTSVP. Over residues 905–918 the composition is skewed to low complexity; it reads MGLRPESSVPTSVP.

In terms of assembly, forms a ribonucleoprotein complex with the 23S RNA, where a single polymerase molecule binds to a single viral RNA genome. Since the viral RNA is not encapsidated, ribonucleoprotein complex formation appears to be the strategy to survive in the host as persistent virus.

Its subcellular location is the host cytoplasm. It carries out the reaction RNA(n) + a ribonucleoside 5'-triphosphate = RNA(n+1) + diphosphate. Functionally, RNA-directed RNA polymerase that replicates the viral (+) and (-) genome. This chain is RNA-directed RNA polymerase, found in Saccharomyces 23S RNA narnavirus (ScNV-23S).